The sequence spans 343 residues: Cytoplasmic tRNA 2-thiolation protein 1 (343 aa).

The protein belongs to the TtcA family. CTU1/NCS6/ATPBD3 subfamily.

It is found in the cytoplasm. Its pathway is tRNA modification; 5-methoxycarbonylmethyl-2-thiouridine-tRNA biosynthesis. Plays a central role in 2-thiolation of mcm(5)S(2)U at tRNA wobble positions of tRNA(Lys), tRNA(Glu) and tRNA(Gln). Directly binds tRNAs and probably acts by catalyzing adenylation of tRNAs, an intermediate required for 2-thiolation. It is unclear whether it acts as a sulfurtransferase that transfers sulfur from thiocarboxylated URM1 onto the uridine of tRNAs at wobble position. In Drosophila erecta (Fruit fly), this protein is Cytoplasmic tRNA 2-thiolation protein 1.